A 271-amino-acid polypeptide reads, in one-letter code: Orotidine 5'-phosphate decarboxylase (271 aa).

Catalysis depends on K95, which acts as the Proton donor.

The protein belongs to the OMP decarboxylase family. Type 2 subfamily.

It carries out the reaction orotidine 5'-phosphate + H(+) = UMP + CO2. It functions in the pathway pyrimidine metabolism; UMP biosynthesis via de novo pathway; UMP from orotate: step 2/2. The chain is Orotidine 5'-phosphate decarboxylase from Ralstonia pickettii (strain 12J).